The chain runs to 226 residues: Orotidine 5'-phosphate decarboxylase (226 aa).

Substrate contacts are provided by residues Asp8, Lys30, 58–67 (DLKIHDIPNT), Thr117, Arg177, Gln186, Gly206, and Arg207. Lys60 serves as the catalytic Proton donor.

It belongs to the OMP decarboxylase family. Type 1 subfamily. In terms of assembly, homodimer.

The catalysed reaction is orotidine 5'-phosphate + H(+) = UMP + CO2. It functions in the pathway pyrimidine metabolism; UMP biosynthesis via de novo pathway; UMP from orotate: step 2/2. Catalyzes the decarboxylation of orotidine 5'-monophosphate (OMP) to uridine 5'-monophosphate (UMP). The chain is Orotidine 5'-phosphate decarboxylase from Campylobacter jejuni subsp. doylei (strain ATCC BAA-1458 / RM4099 / 269.97).